Consider the following 259-residue polypeptide: UPF0246 protein SG0407 (259 aa).

Belongs to the UPF0246 family.

This chain is UPF0246 protein SG0407, found in Sodalis glossinidius (strain morsitans).